Consider the following 1000-residue polypeptide: DENN domain-containing protein 2A (1000 aa).

Disordered stretches follow at residues 1-155 (MLEA…LRFQ), 174-328 (DGSA…RKSY), 427-464 (KLLDTRKLSRDGAGSPLRTSPPSTPSSPDDTFFNLGDL), and 491-525 (KRVKRLSQSTESNSGKVTDENSESDSDTEEKLKAH). The span at 34-43 (QLNSVPNSGP) shows a compositional bias: polar residues. 4 stretches are compositionally biased toward basic and acidic residues: residues 56 to 70 (IKDKISKWEGKKEPP), 79 to 117 (DGQEDHLPSCKVERRGSELTRTKNGMRLETERLQNDSRA), 140 to 155 (SQHRGRELKPSDLRFQ), and 221 to 237 (HLEVREPGPEISEDWKG). Pro residues-rich tracts occupy residues 249–258 (PPKPFINPVP) and 288–307 (PPLPSLPPPPPPLPSSPPPT). Over residues 427–436 (KLLDTRKLSR) the composition is skewed to basic and acidic residues. The span at 496-506 (LSQSTESNSGK) shows a compositional bias: polar residues. Ser544 bears the Phosphoserine mark. The 150-residue stretch at 559–708 (EYFVVVSLHK…PFPALGKTII (150 aa)) folds into the uDENN domain. The region spanning 730–863 (RLEHVDFESL…LQVALEHILE (134 aa)) is the cDENN domain. The 96-residue stretch at 865-960 (RNDLACDQDG…QERELRRQDA (96 aa)) folds into the dDENN domain.

Its subcellular location is the cytoplasm. The protein localises to the cytoskeleton. Its function is as follows. Guanine nucleotide exchange factor (GEF) which may activate RAB9A and RAB9B. Promotes the exchange of GDP to GTP, converting inactive GDP-bound Rab proteins into their active GTP-bound form. May play a role in late endosomes back to trans-Golgi network/TGN transport. The chain is DENN domain-containing protein 2A (Dennd2a) from Mus musculus (Mouse).